The sequence spans 328 residues: L-lactate dehydrogenase (328 aa).

NAD(+)-binding positions include Val18, Glu39, Lys46, Tyr71, and 85-86 (GA). Substrate-binding residues include Gln88 and Arg94. NAD(+) contacts are provided by residues Ser107, 124–126 (AAN), and Ser149. 126-129 (NPVD) contributes to the substrate binding site. Residue 154–157 (DSAR) coordinates substrate. 2 residues coordinate beta-D-fructose 1,6-bisphosphate: Arg159 and His174. Catalysis depends on His181, which acts as the Proton acceptor. Tyr226 bears the Phosphotyrosine mark. Thr235 contacts substrate.

This sequence belongs to the LDH/MDH superfamily. LDH family. As to quaternary structure, homotetramer.

The protein resides in the cytoplasm. The catalysed reaction is (S)-lactate + NAD(+) = pyruvate + NADH + H(+). The protein operates within fermentation; pyruvate fermentation to lactate; (S)-lactate from pyruvate: step 1/1. With respect to regulation, allosterically activated by fructose 1,6-bisphosphate (FBP). Its function is as follows. Catalyzes the conversion of lactate to pyruvate. The protein is L-lactate dehydrogenase of Streptococcus sanguinis (strain SK36).